A 479-amino-acid polypeptide reads, in one-letter code: F-box/LRR-repeat protein 16 (479 aa).

A disordered region spans residues 1–62 (MSSPGIDGDP…PTLPPPSLAA (62 aa)). Pro residues predominate over residues 47 to 60 (CQPPPPPTLPPPSL). Position 92 is an omega-N-methylarginine (arginine 92). Positions 94 to 139 (PLATDEKILNGLFWYFSACEKCVLAQVCKAWRRVLYQPKFWAGLTP) constitute an F-box domain. LRR repeat units lie at residues 244 to 266 (ITSLSVSDCINVADDAIAAISQL), 267 to 290 (LPNLAELSLQAYHVTDTALAYFTA), 319 to 343 (LPNLTALSLSGCSKVTDDGVELVAE), 345 to 369 (LRKLRSLDLSWCPRITDMALEYVAC), 371 to 395 (LHRLEELVLDRCVRITDTGLSYLST), 396 to 420 (MSSLRSLYLRWCCQVQDFGLKHLLA), and 446 to 470 (LQELEELELTNCPGATPELFKYFSQ).

Interacts with SKP1 and CUL1.

Substrate-recognition component of the SCF (SKP1-CUL1-F-box protein)-type E3 ubiquitin ligase complex. This is F-box/LRR-repeat protein 16 (FBXL16) from Homo sapiens (Human).